The primary structure comprises 748 residues: MTKLSTVDPNASVLNPQRFIQRERENCSIDIDQVNTFLESDPRSRDLTHLIVDQLVNDPIIKADSATYDQTKLTQREVTVKKIARMALYMEQDIKTVRKHFRDTDLLKSLQDFGDTTTPPLTNKDLAIFDKRLSLVANMDPQLSTRIGVHLGLFGNCIKGNGTDEQIKYWLQTRGAILIKGIYGCFAMTELGHGSNVAQLQTTATYDQESDTFIINTPDLAATKWWIGGAAHSATHTACYARLLVNGKDYGVKTFVVPLRDPSSLQLMPGIAIGDIGAKMGRDGIDNGWIQFRNVVIPREFMLSRFTKVHRNPGATPTVEVDPQLDQISGYSALLSGRVNMVMDSFRFGSKFATIATRYAVGRQQFADKPGQPEKQLIDYPLHQYRVLPQIVIPYIISPAAFSLLNFYYSTLDELYAASSKNDKRALVVVSQKLKNLFIDSASLKATNTWLVAQLIDELRQTCGGHGYSGYNAFGKGYNDWVVQCTWEGDNNILSLTSAKSILKKFVDSATKGKYNKELDKRSFRYLDPQFIRKVFTSSSENKLDDLYDYTNIWAVALLKLLRHIAKQVDSTKDLDGASKLLVLVSKFHALYVMLNTYYEKLNSPTDSYVTCPKTKEQLWNVYKLFSLYFIDKHAGEFQQFKILSPDQISQVVQPRLLKLLPEIRKECISLTDSFKWPDGMLNAPIGYYDGDIYHNYFNEVVKNNPVEKDGAGIPPYHELLANMLTRGDEFARLGGANNAEILSKLTK.

The protein belongs to the acyl-CoA oxidase family. It depends on FAD as a cofactor.

The protein resides in the peroxisome. It catalyses the reaction a 2,3-saturated acyl-CoA + O2 = a (2E)-enoyl-CoA + H2O2. It functions in the pathway lipid metabolism; peroxisomal fatty acid beta-oxidation. In Candida glabrata (strain ATCC 2001 / BCRC 20586 / JCM 3761 / NBRC 0622 / NRRL Y-65 / CBS 138) (Yeast), this protein is Acyl-coenzyme A oxidase (POX1).